Here is an 87-residue protein sequence, read N- to C-terminus: Large ribosomal subunit protein bL27 (87 aa).

The tract at residues 1–25 (MAHKKGASSSRNGRDSNAQRLGVKR) is disordered. The segment covering 7–19 (ASSSRNGRDSNAQ) has biased composition (polar residues).

The protein belongs to the bacterial ribosomal protein bL27 family.

This chain is Large ribosomal subunit protein bL27, found in Rhodococcus jostii (strain RHA1).